Here is a 237-residue protein sequence, read N- to C-terminus: Orotidine 5'-phosphate decarboxylase (237 aa).

Substrate-binding positions include aspartate 10, lysine 33, 60 to 69 (DLKLHDIPNT), threonine 124, arginine 186, glutamine 195, glycine 215, and arginine 216. Lysine 62 serves as the catalytic Proton donor.

It belongs to the OMP decarboxylase family. Type 1 subfamily. Homodimer.

The enzyme catalyses orotidine 5'-phosphate + H(+) = UMP + CO2. Its pathway is pyrimidine metabolism; UMP biosynthesis via de novo pathway; UMP from orotate: step 2/2. Catalyzes the decarboxylation of orotidine 5'-monophosphate (OMP) to uridine 5'-monophosphate (UMP). This is Orotidine 5'-phosphate decarboxylase from Lactiplantibacillus plantarum (strain ATCC BAA-793 / NCIMB 8826 / WCFS1) (Lactobacillus plantarum).